Reading from the N-terminus, the 802-residue chain is Penicillin G acylase (802 aa).

The first 24 residues, M1–A24, serve as a signal peptide directing secretion. E177 contributes to the Ca(2+) binding site. The propeptide at S235–G265 is spacer peptide. Residue S266 is the Nucleophile of the active site. Residue D341 coordinates Ca(2+).

The protein belongs to the peptidase S45 family. In terms of assembly, heterodimer of an alpha subunit and a beta subunit processed from the same precursor. Ca(2+) is required as a cofactor.

Its subcellular location is the secreted. It catalyses the reaction a penicillin + H2O = 6-aminopenicillanate + a carboxylate. This Priestia megaterium (Bacillus megaterium) protein is Penicillin G acylase (pac).